A 505-amino-acid polypeptide reads, in one-letter code: Chromosomal replication initiator protein DnaA (505 aa).

Residues 1–90 (MSVELWQQCV…RRSSAPRAAP (90 aa)) are domain I, interacts with DnaA modulators. Residues 91-168 (NAPVSAAVAA…QVEGALKHTS (78 aa)) are domain II. Residues 169-385 (YLNRTFTFDT…GALKRVIAHS (217 aa)) are domain III, AAA+ region. 4 residues coordinate ATP: Gly-213, Gly-215, Lys-216, and Thr-217. The domain IV, binds dsDNA stretch occupies residues 386 to 505 (HFMGRDITIE…YKNLLRTLTT (120 aa)).

It belongs to the DnaA family. Oligomerizes as a right-handed, spiral filament on DNA at oriC.

The protein resides in the cytoplasm. Its function is as follows. Plays an essential role in the initiation and regulation of chromosomal replication. ATP-DnaA binds to the origin of replication (oriC) to initiate formation of the DNA replication initiation complex once per cell cycle. Binds the DnaA box (a 9 base pair repeat at the origin) and separates the double-stranded (ds)DNA. Forms a right-handed helical filament on oriC DNA; dsDNA binds to the exterior of the filament while single-stranded (ss)DNA is stabiized in the filament's interior. The ATP-DnaA-oriC complex binds and stabilizes one strand of the AT-rich DNA unwinding element (DUE), permitting loading of DNA polymerase. After initiation quickly degrades to an ADP-DnaA complex that is not apt for DNA replication. Binds acidic phospholipids. In Pseudomonas putida (strain ATCC 700007 / DSM 6899 / JCM 31910 / BCRC 17059 / LMG 24140 / F1), this protein is Chromosomal replication initiator protein DnaA.